Here is an 874-residue protein sequence, read N- to C-terminus: Alanine--tRNA ligase (874 aa).

4 residues coordinate Zn(2+): H562, H566, C665, and H669.

The protein belongs to the class-II aminoacyl-tRNA synthetase family. Requires Zn(2+) as cofactor.

Its subcellular location is the cytoplasm. The enzyme catalyses tRNA(Ala) + L-alanine + ATP = L-alanyl-tRNA(Ala) + AMP + diphosphate. In terms of biological role, catalyzes the attachment of alanine to tRNA(Ala) in a two-step reaction: alanine is first activated by ATP to form Ala-AMP and then transferred to the acceptor end of tRNA(Ala). Also edits incorrectly charged Ser-tRNA(Ala) and Gly-tRNA(Ala) via its editing domain. This chain is Alanine--tRNA ligase, found in Pseudomonas savastanoi pv. phaseolicola (strain 1448A / Race 6) (Pseudomonas syringae pv. phaseolicola (strain 1448A / Race 6)).